The chain runs to 129 residues: Small ribosomal subunit protein uS11 (129 aa).

It belongs to the universal ribosomal protein uS11 family. Part of the 30S ribosomal subunit. Interacts with proteins S7 and S18. Binds to IF-3.

Located on the platform of the 30S subunit, it bridges several disparate RNA helices of the 16S rRNA. Forms part of the Shine-Dalgarno cleft in the 70S ribosome. The protein is Small ribosomal subunit protein uS11 of Azoarcus sp. (strain BH72).